The sequence spans 415 residues: MAASTNRLRFLYSSARTVPQTGSITPISRRTYATTEPSPSATGAPATARKRTNFTDKLNAGPSFADFVSGGEDNAPLEPSEAYALKTAMVGPAGRKKEMTRLPSWLKTPIPDSKNYQRLKKDLRGLNLHTVCEEARCPNISDCWGGSDKSAATATIMLMGDTCTRGCRFCSVKTNRRPPPLDPHEPENTAEAISRWSLGYVVLTSVDRDDLADGGARHFAETVIKIKQKKPSMLVECLTGDYLGDLEMVKLVARSGLDVYAHNVETVEALTPFVRDRRATFQQSLRVLEAAKQARPDLITKTSLMLGFGETEEQLWDALRQLRSVGVDVVTFGQYMRPTKRHMPVHEYVTPDQFELWRQRALDMGFLYCASGPLVRSSYKAGEAFIENVLKKRRAAGTAGESVTDSKAAVDEATR.

Residues 1–32 constitute a mitochondrion transit peptide; that stretch reads MAASTNRLRFLYSSARTVPQTGSITPISRRTY. A compositionally biased stretch (polar residues) spans 22-32; sequence GSITPISRRTY. Positions 22–53 are disordered; the sequence is GSITPISRRTYATTEPSPSATGAPATARKRTN. Residues 33–47 are compositionally biased toward low complexity; sequence ATTEPSPSATGAPAT. [4Fe-4S] cluster contacts are provided by Cys-132, Cys-137, Cys-143, Cys-163, Cys-167, Cys-170, and Ser-378. The 222-residue stretch at 146–367 folds into the Radical SAM core domain; it reads GSDKSAATAT…RQRALDMGFL (222 aa). Residues 395 to 415 are disordered; that stretch reads AAGTAGESVTDSKAAVDEATR.

The protein belongs to the radical SAM superfamily. Lipoyl synthase family. Requires [4Fe-4S] cluster as cofactor.

It is found in the mitochondrion. The enzyme catalyses [[Fe-S] cluster scaffold protein carrying a second [4Fe-4S](2+) cluster] + N(6)-octanoyl-L-lysyl-[protein] + 2 oxidized [2Fe-2S]-[ferredoxin] + 2 S-adenosyl-L-methionine + 4 H(+) = [[Fe-S] cluster scaffold protein] + N(6)-[(R)-dihydrolipoyl]-L-lysyl-[protein] + 4 Fe(3+) + 2 hydrogen sulfide + 2 5'-deoxyadenosine + 2 L-methionine + 2 reduced [2Fe-2S]-[ferredoxin]. It participates in protein modification; protein lipoylation via endogenous pathway; protein N(6)-(lipoyl)lysine from octanoyl-[acyl-carrier-protein]: step 2/2. Its function is as follows. Catalyzes the radical-mediated insertion of two sulfur atoms into the C-6 and C-8 positions of the octanoyl moiety bound to the lipoyl domains of lipoate-dependent enzymes, thereby converting the octanoylated domains into lipoylated derivatives. The chain is Lipoyl synthase, mitochondrial from Aspergillus oryzae (strain ATCC 42149 / RIB 40) (Yellow koji mold).